A 439-amino-acid polypeptide reads, in one-letter code: MAAQTTEKLDQLDLNVQAAPTADQVPAEAEEDSDDAQDEGAAEAGAAGAGSTLADKKKKKKKPKKKSKKKGGAKVQSEPPRVPVSNLFPNGQYPEGEIVEYLNDNAYRTTNEEKRYLDRMNNDFLQEYRQGAEVHRQVRQYAQKNIKPGQTLTEIAEGIEDSVRALTGHSGLEEGDNIKGGMGFPCGLSINHCAAHYTPNAGNKMVLNEGDVMKVDFGAHLNGRIVDSAFTMTFDPVYDPLLAAVKDATNTGIREAGIDVRMSDIGAAIQEAMESYEVEINGTMHPVKCIRNLNGHNIDQHVIHGGKSVPIVKSTDQTKMEEGEVFAIETFGSTGKGYVREEMETSHYALAADAPNVPLRLSSAKNLLNLINKNFGTLPFCRRYIDRLGQDKYLLGLNNLVSSGIVQDYPPLCDIKGSYTAQYEHVCFYFGVFSTLIVY.

The tract at residues 1-90 is disordered; the sequence is MAAQTTEKLD…RVPVSNLFPN (90 aa). The span at 28-41 shows a compositional bias: acidic residues; it reads EAEEDSDDAQDEGA. The segment covering 56-72 has biased composition (basic residues); sequence KKKKKKKPKKKSKKKGG. A substrate-binding site is contributed by histidine 196. A divalent metal cation-binding residues include aspartate 216, aspartate 227, and histidine 296. Residue histidine 304 participates in substrate binding. A divalent metal cation-binding residues include glutamate 329 and glutamate 424.

Belongs to the peptidase M24A family. Methionine aminopeptidase eukaryotic type 2 subfamily. The cofactor is Co(2+). Requires Zn(2+) as cofactor. Mn(2+) serves as cofactor. It depends on Fe(2+) as a cofactor.

It localises to the cytoplasm. It carries out the reaction Release of N-terminal amino acids, preferentially methionine, from peptides and arylamides.. Cotranslationally removes the N-terminal methionine from nascent proteins. The N-terminal methionine is often cleaved when the second residue in the primary sequence is small and uncharged (Met-Ala-, Cys, Gly, Pro, Ser, Thr, or Val). The polypeptide is Methionine aminopeptidase 2-2 (Penicillium rubens (strain ATCC 28089 / DSM 1075 / NRRL 1951 / Wisconsin 54-1255) (Penicillium chrysogenum)).